The following is a 129-amino-acid chain: MTLAVKCPILGFEETKNMEFSTIDEVFVRLKSLDGKDFSFVLINPYLIRPDYEFDIPTYYQELLSLTPESNMKIFNIVAIAKSIEESTVNFLAPVVINLDNNTMVQVILDTVNYPDFFQADQIANYIKK.

The protein belongs to the FliW family. In terms of assembly, interacts with flagellins FlaA and FlaB but not with FlaC; recognizes glycosylated and non-glycosylated FlaA equally. Interacts with CsrA. May form a 3-way complex of flagellin, FliS and FliW simultaneously in which FliS and FliW do not directly interact.

The protein resides in the cytoplasm. In terms of biological role, acts as an anti-CsrA protein, binds CsrA and prevents it from repressing translation of its target genes, one of which is flagellin. Binds to flagellin and participates in the assembly of the flagellum. Its function is as follows. Overexpression leads to increased levels of FlaA and FlaB, but levels of FlaC remain stable. Involved in post-transcriptional regulation of flagellin biosynthesis. The polypeptide is Flagellar assembly factor FliW (Campylobacter jejuni subsp. jejuni serotype O:6 (strain 81116 / NCTC 11828)).